Reading from the N-terminus, the 88-residue chain is MIKDEKINKIYALVKSALDNTDVKNDKKLSLLLMRIQETSINGELFYDYKKELQPAISMYSIQHNFRVPDDLVKLLALVQTPKAWSGF.

In terms of biological role, could impart immunity to carnobacteriocin-BM1 to naturally sensitive host strains. The polypeptide is Putative carnobacteriocin-BM1 immunity protein (Carnobacterium maltaromaticum (Carnobacterium piscicola)).